Reading from the N-terminus, the 533-residue chain is NAD(P)H-quinone oxidoreductase chain 4 1 (533 aa).

14 helical membrane-spanning segments follow: residues 6-26 (FPWLTGIILLPILAALPIPLI), 37-57 (YSLFVGLADFALMVYAFWQHF), 87-107 (LSMPLVLLTGLVTTLAILASW), 113-133 (PKLFHFLLLLLYGAQIAVFTA), 137-157 (MLFFLVWELELVPVYLLISIW), 169-189 (FILYTALASLFILVAGLALAF), 209-229 (WLELLAYAGFLIAFGVKLSIF), 243-263 (NAPGSMLLAGILLKMGGYALI), 277-297 (FAPVLAVLGIVNIIYGALNAF), 311-331 (ISHMGFVLLGIAAYNSLGLNG), 332-352 (ALLQMLSHGLIAAALFFLAGV), 376-396 (FALFTVTAMASLALPGMSGFV), 417-437 (VTILLAAVGLVLTPMYLLSML), and 461-481 (LFVAFCLLVPTLAIGFYPKLT).

Belongs to the complex I subunit 4 family.

The protein resides in the cellular thylakoid membrane. It catalyses the reaction a plastoquinone + NADH + (n+1) H(+)(in) = a plastoquinol + NAD(+) + n H(+)(out). The catalysed reaction is a plastoquinone + NADPH + (n+1) H(+)(in) = a plastoquinol + NADP(+) + n H(+)(out). In terms of biological role, NDH-1 shuttles electrons from NAD(P)H, via FMN and iron-sulfur (Fe-S) centers, to quinones in the respiratory chain. The immediate electron acceptor for the enzyme in this species is believed to be plastoquinone. Couples the redox reaction to proton translocation (for every two electrons transferred, four hydrogen ions are translocated across the cytoplasmic membrane), and thus conserves the redox energy in a proton gradient. In Synechococcus elongatus (strain ATCC 33912 / PCC 7942 / FACHB-805) (Anacystis nidulans R2), this protein is NAD(P)H-quinone oxidoreductase chain 4 1.